The sequence spans 1741 residues: Meiosis regulator and mRNA stability factor 1 (1741 aa).

The NYN domain maps to I345 to V482. Disordered stretches follow at residues K594–I636, T659–A678, and L683–K716. A compositionally biased stretch (basic and acidic residues) spans T659–E668. Positions A788 to G867 constitute an RRM domain. 8 consecutive HTH OST-type domains span residues S872 to G946, S1000 to P1076, Q1097 to R1171, Q1173 to R1248, R1257 to E1332, Q1333 to K1408, S1409 to T1483, and N1484 to D1558. The span at K1684 to V1700 shows a compositional bias: polar residues. The tract at residues K1684–V1727 is disordered.

It is found in the peroxisome. In terms of biological role, essential regulator of oogenesis required for female meiotic progression to repress transposable elements and preventing their mobilization, which is essential for the germline integrity. This Gallus gallus (Chicken) protein is Meiosis regulator and mRNA stability factor 1.